The chain runs to 190 residues: NAD(P)H-quinone oxidoreductase subunit I (190 aa).

4Fe-4S ferredoxin-type domains lie at 55–84 and 95–124; these read GRIHFEFDKCIACEVCVRVCPINLPVVDWT and KHYSIDFGVCIFCGNCVEYCPTNCLSMTEE. 8 residues coordinate [4Fe-4S] cluster: cysteine 64, cysteine 67, cysteine 70, cysteine 74, cysteine 104, cysteine 107, cysteine 110, and cysteine 114. Residues 169–190 are disordered; sequence IEPHDLPAGSQRAGKRPEEITD.

Belongs to the complex I 23 kDa subunit family. As to quaternary structure, NDH-1 is composed of at least 11 different subunits. [4Fe-4S] cluster is required as a cofactor.

Its subcellular location is the cellular thylakoid membrane. The enzyme catalyses a plastoquinone + NADH + (n+1) H(+)(in) = a plastoquinol + NAD(+) + n H(+)(out). It catalyses the reaction a plastoquinone + NADPH + (n+1) H(+)(in) = a plastoquinol + NADP(+) + n H(+)(out). In terms of biological role, NDH-1 shuttles electrons from an unknown electron donor, via FMN and iron-sulfur (Fe-S) centers, to quinones in the respiratory and/or the photosynthetic chain. The immediate electron acceptor for the enzyme in this species is believed to be plastoquinone. Couples the redox reaction to proton translocation, and thus conserves the redox energy in a proton gradient. The polypeptide is NAD(P)H-quinone oxidoreductase subunit I (Microcystis aeruginosa (strain NIES-843 / IAM M-2473)).